Here is a 352-residue protein sequence, read N- to C-terminus: Membrane progestin receptor alpha (352 aa).

The Cytoplasmic segment spans residues 1–75; the sequence is MATVVMEQIG…FLTLFQRHNE (75 aa). A helical membrane pass occupies residues 76 to 96; it reads TLNVWTHLLAAFIILVKWQEI. Over 97 to 110 the chain is Extracellular; that stretch reads SETVDFLRDPHAQP. The chain crosses the membrane as a helical span at residues 111–131; it reads LFIVLLAAFTYLSFSALAHLL. The Cytoplasmic portion of the chain corresponds to 132–139; the sequence is SAKSELSY. Residues 140-160 traverse the membrane as a helical segment; it reads YTFYFLDYVGVAVYQYGSALA. The Extracellular portion of the chain corresponds to 161-175; the sequence is HYYYAIEKEWHTKVQ. The chain crosses the membrane as a helical span at residues 176–196; that stretch reads GLFLPAAAFLAWLTCFGCCYG. Topologically, residues 197 to 242 are cytoplasmic; the sequence is KYASPELPKVANKLFQVVPSALAYCLDISPVVHRIYSCYQEGCSDP. The helical transmembrane segment at 243–263 threads the bilayer; sequence VVAYHFYHVVFFLIGAYFFCC. Residues 264–275 are Extracellular-facing; the sequence is PHPESLFPGKCD. Residues 276 to 296 traverse the membrane as a helical segment; the sequence is FIGQGHQLFHVFVVVCTLTQV. The Cytoplasmic portion of the chain corresponds to 297 to 316; it reads EALRTDFTERRPFYERLHGD. The helical transmembrane segment at 317 to 337 threads the bilayer; the sequence is LAHDAVALFIFTACCSALTAF. At 338–352 the chain is on the extracellular side; that stretch reads YVRQRVRASLHEKGE.

The protein belongs to the ADIPOR family. As to expression, strongly expressed in ovary and brain; lower expression in testis and pituitary. Not detected in heart, kidney, spleen, intestine, gill and muscle.

The protein localises to the cell membrane. Functionally, steroid membrane receptor. Binds progesterone, progestin and 17-hydroxyprogesterone in vitro. Capable of mediating progestin-induced oocyte maturation. This is Membrane progestin receptor alpha (mpra) from Cynoscion nebulosus (Spotted seatrout).